Consider the following 394-residue polypeptide: Chalcone synthase 2 (394 aa).

The active site involves Cys-167.

It belongs to the thiolase-like superfamily. Chalcone/stilbene synthases family.

It catalyses the reaction (E)-4-coumaroyl-CoA + 3 malonyl-CoA + 3 H(+) = 2',4,4',6'-tetrahydroxychalcone + 3 CO2 + 4 CoA. Its pathway is secondary metabolite biosynthesis; flavonoid biosynthesis. Its function is as follows. The primary product of this enzyme is 4,2',4',6'-tetrahydroxychalcone (also termed naringenin-chalcone or chalcone) which can under specific conditions spontaneously isomerize into naringenin. This chain is Chalcone synthase 2 (CHS2), found in Secale cereale (Rye).